The primary structure comprises 334 residues: HTH-type transcriptional repressor PurR (334 aa).

Positions Ala2 to Cys56 constitute an HTH lacI-type domain. Residues Ile4 to Asn23 constitute a DNA-binding region (H-T-H motif). A DNA-binding region spans residues Ser48 to Cys56. Residues Phe73, Lys189, Phe220, and Asp274 each contribute to the hypoxanthine site.

Homodimer.

It functions in the pathway purine metabolism; purine nucleotide biosynthesis [regulation]. In terms of biological role, is the main repressor of the genes involved in the de novo synthesis of purine nucleotides, regulating purB, purC, purEK, purF, purHD, purL, purMN and guaBA expression. PurR is allosterically activated to bind its cognate DNA by binding the purine corepressors, hypoxanthine or guanine, thereby effecting transcription repression. The polypeptide is HTH-type transcriptional repressor PurR (Vibrio vulnificus (strain CMCP6)).